A 158-amino-acid polypeptide reads, in one-letter code: 2-C-methyl-D-erythritol 2,4-cyclodiphosphate synthase (158 aa).

A divalent metal cation is bound by residues Asp-9 and His-11. Residues 9–11 and 35–36 contribute to the 4-CDP-2-C-methyl-D-erythritol 2-phosphate site; these read DVH and HS. Residue His-43 coordinates a divalent metal cation. Residues 57–59, 62–66, 101–107, 133–136, Phe-140, and Arg-143 contribute to the 4-CDP-2-C-methyl-D-erythritol 2-phosphate site; these read DIG, FPDTD, AQKPKMA, and TTTE.

It belongs to the IspF family. As to quaternary structure, homotrimer. A divalent metal cation serves as cofactor.

The catalysed reaction is 4-CDP-2-C-methyl-D-erythritol 2-phosphate = 2-C-methyl-D-erythritol 2,4-cyclic diphosphate + CMP. It participates in isoprenoid biosynthesis; isopentenyl diphosphate biosynthesis via DXP pathway; isopentenyl diphosphate from 1-deoxy-D-xylulose 5-phosphate: step 4/6. Functionally, involved in the biosynthesis of isopentenyl diphosphate (IPP) and dimethylallyl diphosphate (DMAPP), two major building blocks of isoprenoid compounds. Catalyzes the conversion of 4-diphosphocytidyl-2-C-methyl-D-erythritol 2-phosphate (CDP-ME2P) to 2-C-methyl-D-erythritol 2,4-cyclodiphosphate (ME-CPP) with a corresponding release of cytidine 5-monophosphate (CMP). The protein is 2-C-methyl-D-erythritol 2,4-cyclodiphosphate synthase of Bacillus velezensis (strain DSM 23117 / BGSC 10A6 / LMG 26770 / FZB42) (Bacillus amyloliquefaciens subsp. plantarum).